A 522-amino-acid polypeptide reads, in one-letter code: Echinocystic acid 23-monooxygenase (522 aa).

A helical; Signal-anchor for type II membrane protein membrane pass occupies residues 4–24 (LPYIATSIACIVILRWALNMM). N-linked (GlcNAc...) asparagine glycosylation occurs at asparagine 190. A heme-binding site is contributed by cysteine 470.

Belongs to the cytochrome P450 family. Heme serves as cofactor. In terms of tissue distribution, mainly expressed in flowers and flower buds, to a lesser extent in young leaves and, at low levels, in old leaves, stems and roots.

Its subcellular location is the membrane. It participates in secondary metabolite biosynthesis; terpenoid biosynthesis. Its function is as follows. Component of the oleanane-type triterpene saponins (e.g. saponarioside A and saponarioside B) biosynthetic pathway, leading to the production of natural products with detergent properties used as traditional sources of soap. An oxidoreductase that facilitates the oxidation of the methyl group to a carboxyl group at the C-23 position of echinocystic acid, resulting in the formation of quillaic acid (QA). The sequence is that of Echinocystic acid 23-monooxygenase from Saponaria officinalis (Common soapwort).